A 122-amino-acid polypeptide reads, in one-letter code: Large ribosomal subunit protein uL18 (122 aa).

Belongs to the universal ribosomal protein uL18 family. Part of the 50S ribosomal subunit; part of the 5S rRNA/L5/L18/L25 subcomplex. Contacts the 5S and 23S rRNAs.

Functionally, this is one of the proteins that bind and probably mediate the attachment of the 5S RNA into the large ribosomal subunit, where it forms part of the central protuberance. This is Large ribosomal subunit protein uL18 from Pseudothermotoga lettingae (strain ATCC BAA-301 / DSM 14385 / NBRC 107922 / TMO) (Thermotoga lettingae).